We begin with the raw amino-acid sequence, 473 residues long: Xylan O-acetyltransferase 14 (473 aa).

Over residues 1–17 (MTTTGSTPPRKNRSNVT) the composition is skewed to polar residues. The disordered stretch occupies residues 1-22 (MTTTGSTPPRKNRSNVTGGEGG). Residues 1 to 54 (MTTTGSTPPRKNRSNVTGGEGGSLEEYAWRAAGEAAAAKKATRAWGVSVSLRSH) lie on the Cytoplasmic side of the membrane. Residues 55–75 (FSSLVLLLLLLLVALAVSATT) traverse the membrane as a helical; Signal-anchor for type II membrane protein segment. The disordered stretch occupies residues 76-101 (KNGDPAETPHAPPLPPPASIKLPSSS). Residues 76 to 473 (KNGDPAETPH…NQLLYAHIVS (398 aa)) are Lumenal-facing. Intrachain disulfides connect Cys-108–Cys-159, Cys-130–Cys-195, Cys-139–Cys-455, and Cys-370–Cys-451. A GDS motif motif is present at residues 182-184 (GDS). The active-site Nucleophile is the Ser-184. Asn-209, Asn-223, and Asn-414 each carry an N-linked (GlcNAc...) asparagine glycan. Catalysis depends on Asp-450, which acts as the Proton donor. A DXXH motif motif is present at residues 450–453 (DCIH). His-453 (proton acceptor) is an active-site residue.

The protein belongs to the PC-esterase family. TBL subfamily.

The protein resides in the golgi apparatus membrane. Its function is as follows. Xylan acetyltransferase required for 2-O- and 3-O-monoacetylation of xylosyl residues in xylan. Catalyzes the 2-O-acetylation of xylan, followed by nonenzymatic acetyl migration to the O-3 position, resulting in products that are monoacetylated at both O-2 and O-3 positions. The polypeptide is Xylan O-acetyltransferase 14 (Oryza sativa subsp. japonica (Rice)).